The sequence spans 252 residues: tRNA pseudouridine synthase A (252 aa).

Asp-52 (nucleophile) is an active-site residue. Residue Tyr-112 coordinates substrate.

Belongs to the tRNA pseudouridine synthase TruA family. As to quaternary structure, homodimer.

The catalysed reaction is uridine(38/39/40) in tRNA = pseudouridine(38/39/40) in tRNA. Its function is as follows. Formation of pseudouridine at positions 38, 39 and 40 in the anticodon stem and loop of transfer RNAs. In Porphyromonas gingivalis (strain ATCC 33277 / DSM 20709 / CIP 103683 / JCM 12257 / NCTC 11834 / 2561), this protein is tRNA pseudouridine synthase A.